The chain runs to 929 residues: Collagen alpha-1(XII) chain (929 aa).

The VWFA 1 domain maps to 1–49 (DVEIFAVGVKDAVRSELEAIATPPTATHVYTVEDFDAFQRISFELTQSI). Fibronectin type-III domains are found at residues 67 to 156 (PPRD…LEVR), 158 to 250 (APRN…VGEP), 251 to 340 (KNLR…LQER), 342 to 432 (SPRD…ASPD), 434 to 521 (KIVK…LSPF), and 523 to 613 (APRS…TLRD). An N-linked (GlcNAc...) asparagine glycan is attached at Asn98. O-linked (Xyl...) (chondroitin sulfate) serine glycosylation is found at Ser231, Ser324, and Ser415. Residues 633–805 (DIVLLVDGSW…SLLTNIVNDL (173 aa)) enclose the VWFA 2 domain. The 90-residue stretch at 821-910 (PPSNLVTSEP…AGTETTLPIP (90 aa)) folds into the Fibronectin type-III 7 domain.

This sequence belongs to the fibril-associated collagens with interrupted helices (FACIT) family. In terms of assembly, trimer of identical chains each containing 190 kDa of non-triple-helical sequences. The triple-helical tail is stabilized by disulfide bonds at each end. In terms of processing, prolines at the third position of the tripeptide repeating unit (G-X-Y) are hydroxylated in some or all of the chains.

It is found in the secreted. Its subcellular location is the extracellular space. The protein localises to the extracellular matrix. Type XII collagen interacts with type I collagen-containing fibrils, the COL1 domain could be associated with the surface of the fibrils, and the COL2 and NC3 domains may be localized in the perifibrillar matrix. Could play a developmental role in regeneration. This chain is Collagen alpha-1(XII) chain, found in Notophthalmus viridescens (Eastern newt).